A 161-amino-acid chain; its full sequence is MKFFAVLALCIVGAIASPLTADEASLVQSSWKAVSHNEVDILAAVFAAYPDIQAKFPQFAGKDLASIKDTGAFATHATRIVSFLSEVIALSGNASNAAAVEGLLNKLGSDHKARGVSAAQFGEFRTALVSYLSNHVSWGDNVAAAWNKALDNTMAVAVAHL.

Positions 1 to 16 are cleaved as a signal peptide; it reads MKFFAVLALCIVGAIA. The 144-residue stretch at 18–161 folds into the Globin domain; sequence PLTADEASLV…NTMAVAVAHL (144 aa). Residues histidine 76 and histidine 111 each contribute to the heme b site.

This sequence belongs to the globin family. As to quaternary structure, homodimer.

This chain is Globin CTT-VIIB-4 (CTT-7B4), found in Chironomus thummi thummi (Midge).